A 254-amino-acid polypeptide reads, in one-letter code: Small ribosomal subunit protein eS1 (254 aa).

The residue at position 2 (Ala2) is an N-acetylalanine; partial.

This sequence belongs to the eukaryotic ribosomal protein eS1 family. As to quaternary structure, component of the small ribosomal subunit. Mature ribosomes consist of a small (40S) and a large (60S) subunit. The 40S subunit contains about 33 different proteins and 1 molecule of RNA (18S). The 60S subunit contains about 49 different proteins and 3 molecules of RNA (25S, 5.8S and 5S).

It localises to the cytoplasm. In Zygosaccharomyces rouxii (strain ATCC 2623 / CBS 732 / NBRC 1130 / NCYC 568 / NRRL Y-229), this protein is Small ribosomal subunit protein eS1.